A 327-amino-acid polypeptide reads, in one-letter code: G protein pathway suppressor 2 (327 aa).

A coiled-coil region spans residues 14-109 (MARALHRHIM…RRRKEQSDLT (96 aa)). The tract at residues 26 to 65 (RERKRQEEEEVDKMMEQKMKEEQERRKKKEMEERMSLEET) is disordered. Residues K45 and K71 each participate in a glycyl lysine isopeptide (Lys-Gly) (interchain with G-Cter in SUMO1) cross-link. The interval 61–94 (SLEETKEQILKLEEKLLALQEEKHQLFLQLKKVL) is interaction with SUMO. Disordered regions lie at residues 177-208 (HGQFQGSPGGAYGTAQPPPHYGPTQPAYSPSQ) and 253-327 (QKQM…FYHK). Positions 253-271 (QKQMEHANQQTGFSDSSSL) are enriched in polar residues. R312 carries the post-translational modification Asymmetric dimethylarginine. Residues 317–327 (QHSQNPRFYHK) are compositionally biased toward polar residues. The residue at position 323 (R323) is an Asymmetric dimethylarginine; alternate. The residue at position 323 (R323) is an Omega-N-methylarginine; alternate.

Component of the N-Cor repressor complex, at least composed of NCOR1, NCOR2, HDAC3, TBL1X, TBL1R, CORO2A and GPS2. Interacts (when sumoylated at Lys-71) with TBL1X; leading to protect GPS2 from degradation by the proteasome. Interacts with UBE2N; leading to inhibit UBE2N/Ubc13 activity. Interacts with TRAF1. Interacts with TRAF2. Interacts with TRAF6. Interacts with PPARG (when in the liganded conformation). Interacts with (sumoylated) NR1H2; interaction with sumoylated NR1H2 and NR5A2 onto hepatic acute phase protein promoters prevents N-Cor corepressor complex dissociation. Interacts with (sumoylated) NR5A2; interaction with sumoylated NR1H2 and NR5A2 onto hepatic acute phase protein promoters prevents N-Cor corepressor complex dissociation. Interacts with NR1H3. Interacts with RFX4. Interacts with ANKRD26. As to quaternary structure, (Microbial infection) Interacts (via coiled coil domain) with hepatitis C virus (HCV) NS5A. Sumoylation regulates its subcellular location. Sumoylation at Lys-45 and Lys-71 regulates the shuttling between the cytoplasm and the nucleus. Sumoylation at Lys-71 is required for interaction with TBL1X. Sumoylated at Lys-45 and Lys-71 in mitochondrion. Desumoylation by SENP1 leads to relocation from the mitochondria to the nucleus. Post-translationally, ubiquitinated at the C-terminus by SIAH2; leading to its degradation by the proteasome. Interaction with TBL1X and methylation at Arg-323 protect GPS2 against ubiquitination and degradation. In terms of processing, methylated at Arg-312 and Arg-323 by PRMT6. Methylation at Arg-323 protects from degradation by the proteasome. Widely expressed.

The protein resides in the nucleus. It localises to the mitochondrion. The protein localises to the cytoplasm. Its subcellular location is the cytosol. Its function is as follows. Key regulator of inflammation, lipid metabolism and mitochondrion homeostasis that acts by inhibiting the activity of the ubiquitin-conjugating enzyme UBE2N/Ubc13, thereby inhibiting 'Lys-63'-linked ubiquitination. In the nucleus, can both acts as a corepressor and coactivator of transcription, depending on the context. Acts as a transcription coactivator in adipocytes by promoting the recruitment of PPARG to promoters: acts by inhibiting the activity of the ubiquitin-conjugating enzyme UBE2N/Ubc13, leading to stabilization of KDM4A and subsequent histone H3 'Lys-9' (H3K9) demethylation. Promotes cholesterol efflux by acting as a transcription coactivator. Acts as a regulator of B-cell development by inhibiting UBE2N/Ubc13, thereby restricting the activation of Toll-like receptors (TLRs) and B-cell antigen receptors (BCRs) signaling pathways. Acts as a key mediator of mitochondrial stress response: in response to mitochondrial depolarization, relocates from the mitochondria to the nucleus following desumoylation and specifically promotes expression of nuclear-encoded mitochondrial genes. Promotes transcription of nuclear-encoded mitochondrial genes by inhibiting UBE2N/Ubc13. Can also act as a corepressor as part of the N-Cor repressor complex by repressing active PPARG. Plays an anti-inflammatory role in macrophages and is required for insulin sensitivity by acting as a corepressor. Plays an anti-inflammatory role during the hepatic acute phase response by interacting with sumoylated NR1H2 and NR5A2 proteins, thereby preventing N-Cor corepressor complex dissociation. In the cytosol, also plays a non-transcriptional role by regulating insulin signaling and pro-inflammatory pathways. In the cytoplasm, acts as a negative regulator of inflammation by inhibiting the pro-inflammatory TNF-alpha pathway; acts by repressing UBE2N/Ubc13 activity. In the cytoplasm of adipocytes, restricts the activation of insulin signaling via inhibition of UBE2N/Ubc13-mediated ubiquitination of AKT. Able to suppress G-protein- and mitogen-activated protein kinase-mediated signal transduction. Acts as a tumor-suppressor in liposarcoma. (Microbial infection) Required for efficient replication of hepatitis C virus (HCV) by promoting the interaction between VAPA and HCV virus protein NS5A. This chain is G protein pathway suppressor 2, found in Homo sapiens (Human).